Consider the following 633-residue polypeptide: Probable extracellular metalloproteinase 5 (633 aa).

An N-terminal signal peptide occupies residues Met-1–Ala-20. The propeptide occupies His-21–His-244. Residue Asn-285 is glycosylated (N-linked (GlcNAc...) asparagine). Residue His-428 coordinates Zn(2+). The active site involves Glu-429. His-432 serves as a coordination point for Zn(2+). 2 N-linked (GlcNAc...) asparagine glycosylation sites follow: Asn-592 and Asn-621.

The protein belongs to the peptidase M36 family. The cofactor is Zn(2+).

The protein resides in the secreted. Functionally, secreted metalloproteinase probably acting as a virulence factor. The chain is Probable extracellular metalloproteinase 5 (MEP5) from Trichophyton verrucosum (strain HKI 0517).